A 533-amino-acid polypeptide reads, in one-letter code: Flavin-dependent halogenase gsfI (533 aa).

FAD-binding residues include glycine 14, glycine 17, and glutamate 47. 2 residues coordinate chloride: serine 331 and glycine 332.

This sequence belongs to the flavin-dependent halogenase family.

The enzyme catalyses griseophenone C + FADH2 + chloride + O2 = griseophenone B + FAD + 2 H2O + H(+). Its pathway is secondary metabolite biosynthesis; terpenoid biosynthesis. Its function is as follows. Flavin-dependent halogenase; part of the gene cluster that mediates the biosynthesis of griseofulvin, an important antifungal drug that has been in use for a long time for treating dermatophyte infections. The first step of the pathway is the formation of the heptaketide backbone by gsfA which is initiated by priming with acetyl-CoA, followed by sequential condensations of 6 malonyl-CoA units. The resulting benzophenone can undergo a spontaneous dehydration to form norlichexanthone. However, the true precursor for the griseofulvin biosynthesis is not norlichexanthone, but the heptaketide benzophenone that is O-methylated at 3-OH by gsfB to produce griseophenone D which is further methylated at 9-OH by gsfC to yield griseophenone C. Griseophenone C is then substrate of halogenase gsfI which is responsible for the regio-specific chlorination at the C13 position to form griseophenone B. The cytochrome P450 gsfF catalyzes the coupling of orcinol and phloroglucinol rings in griseophenone B to form desmethyl-dehydrogriseofulvin A which is further methylated at 5-OH by gsfD to yield dehydrogriseofulvin. Finally, gsfE performs stereospecific reduction of enone 18 of dehydrogriseofulvin to afford the final product griseofulvin. The polypeptide is Flavin-dependent halogenase gsfI (Penicillium aethiopicum).